A 118-amino-acid polypeptide reads, in one-letter code: Thioredoxin H3 (118 aa).

A2 carries the post-translational modification N-acetylalanine. One can recognise a Thioredoxin domain in the interval 2-113 (AAEGEVIACH…IIANLEKHKT (112 aa)). Residues C39 and C42 each act as nucleophile in the active site. A disulfide bridge links C39 with C42.

This sequence belongs to the thioredoxin family. Plant H-type subfamily. In terms of assembly, interacts with FBA5 and FBA8. Interacts with FBA6. Interacts with MDH1.

Its subcellular location is the cytoplasm. In terms of biological role, thiol-disulfide oxidoreductase that possesses disulfide reductase and insulin disulfide bonds reducing activities. Heat shock causes oligomerization and formation of high molecular weight (HMW) complexes with concomitant functional switching from a disulfide reductase to chaperone. The chain is Thioredoxin H3 (TRX3) from Arabidopsis thaliana (Mouse-ear cress).